The primary structure comprises 271 residues: Urease accessory protein UreD (271 aa).

Belongs to the UreD family. As to quaternary structure, ureD, UreF and UreG form a complex that acts as a GTP-hydrolysis-dependent molecular chaperone, activating the urease apoprotein by helping to assemble the nickel containing metallocenter of UreC. The UreE protein probably delivers the nickel.

Its subcellular location is the cytoplasm. Required for maturation of urease via the functional incorporation of the urease nickel metallocenter. The protein is Urease accessory protein UreD of Haemophilus influenzae (strain PittGG).